We begin with the raw amino-acid sequence, 301 residues long: ATP synthase gamma chain (301 aa).

Belongs to the ATPase gamma chain family. As to quaternary structure, F-type ATPases have 2 components, CF(1) - the catalytic core - and CF(0) - the membrane proton channel. CF(1) has five subunits: alpha(3), beta(3), gamma(1), delta(1), epsilon(1). CF(0) has three main subunits: a, b and c.

Its subcellular location is the cell inner membrane. In terms of biological role, produces ATP from ADP in the presence of a proton gradient across the membrane. The gamma chain is believed to be important in regulating ATPase activity and the flow of protons through the CF(0) complex. The sequence is that of ATP synthase gamma chain from Helicobacter acinonychis (strain Sheeba).